The following is a 343-amino-acid chain: SET and MYND domain-containing protein DDB_G0292454 (343 aa).

In terms of domain architecture, SET spans 77 to 307; sequence EPFISYPSII…PGDEITISYT (231 aa). Zn(2+) is bound by residues Cys93, Cys96, Cys111, Cys114, Cys120, Cys124, His133, and Cys137. Residues 93–137 form an MYND-type zinc finger; that stretch reads CNHCLKEIKKEEEEIKQECEECKVYKYCSIECKEKSSIEYHSVLC.

This sequence belongs to the class V-like SAM-binding methyltransferase superfamily.

Functionally, probable methyltransferase. This Dictyostelium discoideum (Social amoeba) protein is SET and MYND domain-containing protein DDB_G0292454.